Reading from the N-terminus, the 203-residue chain is MTLVPYVVEDTGRGERAMDIYSRLLKDRIVMIGQEITEPLANTVIAQLLFLMSEDPQKDIKVFINSPGGYITAGLAIYDTIRFLGCDVNTYCIGQAASMGALLLSAGTKGKRYALPHSRMMIHQPSGGIIGTSADIQLQAAEILTLKKHLANILSECTGQPVEKIIEDSERDFFMGAEDAISYGLIDKVVSSAKDTKDKDTIS.

S98 acts as the Nucleophile in catalysis. Residue H123 is part of the active site.

The protein belongs to the peptidase S14 family. In terms of assembly, fourteen ClpP subunits assemble into 2 heptameric rings which stack back to back to give a disk-like structure with a central cavity, resembling the structure of eukaryotic proteasomes.

It localises to the cytoplasm. It catalyses the reaction Hydrolysis of proteins to small peptides in the presence of ATP and magnesium. alpha-casein is the usual test substrate. In the absence of ATP, only oligopeptides shorter than five residues are hydrolyzed (such as succinyl-Leu-Tyr-|-NHMec, and Leu-Tyr-Leu-|-Tyr-Trp, in which cleavage of the -Tyr-|-Leu- and -Tyr-|-Trp bonds also occurs).. In terms of biological role, cleaves peptides in various proteins in a process that requires ATP hydrolysis. Has a chymotrypsin-like activity. Plays a major role in the degradation of misfolded proteins. The polypeptide is ATP-dependent Clp protease proteolytic subunit 1 (Chlamydia felis (strain Fe/C-56) (Chlamydophila felis)).